Reading from the N-terminus, the 676-residue chain is Urocanate hydratase (676 aa).

Positions 15 to 35 (PLPENRGRQAGVPHAPVRTPS) are disordered. NAD(+) contacts are provided by residues 126-127 (GG), Q204, 251-253 (GMS), E271, 317-318 (NV), 343-347 (QTSCH), 354-355 (YY), Y403, and G594.

It belongs to the urocanase family. It depends on NAD(+) as a cofactor.

It catalyses the reaction 4-imidazolone-5-propanoate = trans-urocanate + H2O. It functions in the pathway amino-acid degradation; L-histidine degradation into L-glutamate; N-formimidoyl-L-glutamate from L-histidine: step 2/3. This chain is Urocanate hydratase (UROC1), found in Homo sapiens (Human).